Reading from the N-terminus, the 394-residue chain is Elongation factor Tu (394 aa).

Residues 10–204 (KPHVNVGTIG…ALDNYIPEPE (195 aa)) form the tr-type G domain. The interval 19 to 26 (GHVDHGKT) is G1. 19–26 (GHVDHGKT) provides a ligand contact to GTP. A Mg(2+)-binding site is contributed by Thr-26. Residues 60–64 (GITIS) are G2. Residues 81-84 (DCPG) are G3. Residues 81-85 (DCPGH) and 136-139 (NKCD) contribute to the GTP site. Residues 136-139 (NKCD) are G4. The tract at residues 174-176 (SAL) is G5.

It belongs to the TRAFAC class translation factor GTPase superfamily. Classic translation factor GTPase family. EF-Tu/EF-1A subfamily. Monomer.

The protein localises to the cytoplasm. The catalysed reaction is GTP + H2O = GDP + phosphate + H(+). GTP hydrolase that promotes the GTP-dependent binding of aminoacyl-tRNA to the A-site of ribosomes during protein biosynthesis. The sequence is that of Elongation factor Tu from Idiomarina loihiensis (strain ATCC BAA-735 / DSM 15497 / L2-TR).